A 565-amino-acid polypeptide reads, in one-letter code: Calcium-dependent protein kinase 21 (565 aa).

Gly-2 carries the N-myristoyl glycine lipid modification. The interval 28–55 (PVPDAEAASPRKDGVDGDGDDVRGGGGG) is disordered. The segment covering 36 to 50 (SPRKDGVDGDGDDVR) has biased composition (basic and acidic residues). In terms of domain architecture, Protein kinase spans 77 to 358 (YVLGKELGRG…AKQVLEHPWL (282 aa)). ATP contacts are provided by residues 83-91 (LGRGEFGVT) and Lys-106. The active-site Proton acceptor is Asp-224. The tract at residues 364 to 394 (APNVSLGDAVRARLQQFSAMNKFKKKALGVV) is autoinhibitory domain. 4 EF-hand domains span residues 401 to 436 (EEVD…NGQP), 437 to 472 (VPEP…LKKM), 473 to 500 (SNDE…ELRE), and 504 to 539 (PNEQ…GADW). Positions 414, 416, 418, 420, 425, 450, 452, 454, 456, 461, 486, 488, 490, 497, 517, 519, 521, 523, and 528 each coordinate Ca(2+).

This sequence belongs to the protein kinase superfamily. Ser/Thr protein kinase family. CDPK subfamily. Expressed in spikelets and developing seeds.

It is found in the membrane. It catalyses the reaction L-seryl-[protein] + ATP = O-phospho-L-seryl-[protein] + ADP + H(+). The catalysed reaction is L-threonyl-[protein] + ATP = O-phospho-L-threonyl-[protein] + ADP + H(+). Activated by calcium. Autophosphorylation may play an important role in the regulation of the kinase activity. Its function is as follows. May play a role in signal transduction pathways that involve calcium as a second messenger. Functions in signal transduction pathways that positively regulate responses to abscisic acid (ABA) and salt stress. This Oryza sativa subsp. japonica (Rice) protein is Calcium-dependent protein kinase 21.